The following is a 507-amino-acid chain: Fumarate hydratase, mitochondrial (507 aa).

The N-terminal 41 residues, 1–41 (MNRAFCLLARSRRFPRVPSAGAVLSGEAATLPRCAPNVVRM), are a transit peptide targeting the mitochondrion. An N6-acetyllysine; alternate mark is found at Lys-58, Lys-63, and Lys-77. Residues Lys-58, Lys-63, and Lys-77 each carry the N6-succinyllysine; alternate modification. Thr-82 bears the Phosphothreonine mark. Residue Lys-91 is modified to N6-acetyllysine. 2 positions are modified to N6-acetyllysine; alternate: Lys-112 and Lys-119. Lys-112 and Lys-119 each carry N6-succinyllysine; alternate. Substrate contacts are provided by residues 142–144 (SGT), 173–176 (HPND), and 183–185 (SSN). Lys-210 bears the N6-acetyllysine mark. An N6-acetyllysine; alternate modification is found at Lys-220. Lys-220 bears the N6-succinyllysine; alternate mark. A substrate-binding site is contributed by Thr-231. His-232 functions as the Proton donor/acceptor in the catalytic mechanism. Thr-233 is modified (phosphothreonine). The residue at position 289 (Lys-289) is an N6-acetyllysine; alternate. Lys-289 carries the N6-succinyllysine; alternate modification. Residue Ser-362 is part of the active site. Substrate is bound by residues Ser-363 and 368–370 (KVN). The residue at position 363 (Ser-363) is a Phosphoserine. N6-succinyllysine is present on residues Lys-464 and Lys-470. Residue Lys-499 is modified to N6-acetyllysine.

Belongs to the class-II fumarase/aspartase family. Fumarase subfamily. In terms of assembly, homotetramer. Interacts with H2AZ1. In terms of processing, phosphorylation at Thr-233 by PRKDC in response to DNA damage promotes translocation to the nucleus and recruitment to DNA double-strand breaks (DSBs).

Its subcellular location is the mitochondrion. It is found in the cytoplasm. The protein resides in the cytosol. It localises to the nucleus. The protein localises to the chromosome. The enzyme catalyses (S)-malate = fumarate + H2O. It participates in carbohydrate metabolism; tricarboxylic acid cycle; (S)-malate from fumarate: step 1/1. Functionally, catalyzes the reversible stereospecific interconversion of fumarate to L-malate. Experiments in other species have demonstrated that specific isoforms of this protein act in defined pathways and favor one direction over the other. Catalyzes the hydration of fumarate to L-malate in the tricarboxylic acid (TCA) cycle to facilitate a transition step in the production of energy in the form of NADH. In terms of biological role, catalyzes the dehydration of L-malate to fumarate. Fumarate metabolism in the cytosol plays a role during urea cycle and arginine metabolism; fumarate being a by-product of the urea cycle and amino-acid catabolism. Also plays a role in DNA repair by promoting non-homologous end-joining (NHEJ). In response to DNA damage and phosphorylation by PRKDC, translocates to the nucleus and accumulates at DNA double-strand breaks (DSBs): acts by catalyzing formation of fumarate, an inhibitor of KDM2B histone demethylase activity, resulting in enhanced dimethylation of histone H3 'Lys-36' (H3K36me2). The protein is Fumarate hydratase, mitochondrial of Rattus norvegicus (Rat).